Here is a 294-residue protein sequence, read N- to C-terminus: Acetylglutamate kinase (294 aa).

Substrate is bound by residues 63 to 64 (GG), R85, and N188.

This sequence belongs to the acetylglutamate kinase family. ArgB subfamily.

The protein localises to the cytoplasm. It catalyses the reaction N-acetyl-L-glutamate + ATP = N-acetyl-L-glutamyl 5-phosphate + ADP. Its pathway is amino-acid biosynthesis; L-arginine biosynthesis; N(2)-acetyl-L-ornithine from L-glutamate: step 2/4. Catalyzes the ATP-dependent phosphorylation of N-acetyl-L-glutamate. This Methanococcus maripaludis (strain C6 / ATCC BAA-1332) protein is Acetylglutamate kinase.